The chain runs to 239 residues: Endonuclease V (239 aa).

D50 and D118 together coordinate Mg(2+).

This sequence belongs to the endonuclease V family. Requires Mg(2+) as cofactor.

It is found in the cytoplasm. It catalyses the reaction Endonucleolytic cleavage at apurinic or apyrimidinic sites to products with a 5'-phosphate.. DNA repair enzyme involved in the repair of deaminated bases. Selectively cleaves double-stranded DNA at the second phosphodiester bond 3' to a deoxyinosine leaving behind the intact lesion on the nicked DNA. The protein is Endonuclease V of Xylella fastidiosa (strain Temecula1 / ATCC 700964).